A 251-amino-acid polypeptide reads, in one-letter code: MSGHSKWATTKHKKAVIDARRGKMFARLIKNIEVAARVGGGDPAGNPTLYDAIQKAKKSSVPNENIERARKRGAGEEAGGADWQTIMYEGYAPNGVAVLIECLTDNRNRAASEVRVAMTRNGGAMADPGSVSYLFSRKGVVTLEKNGLTEDDVLAAVLEAGAEDVNDLGDSFEVISEPGELVAVRSALQDAGIDYESAEAGFQSSVTVPVDVDGARKVFKLVDALEESDDVQNVWTNVDVSDEVLAELDEE.

Belongs to the TACO1 family.

It is found in the cytoplasm. This chain is Probable transcriptional regulatory protein MMAR_2098, found in Mycobacterium marinum (strain ATCC BAA-535 / M).